The following is a 571-amino-acid chain: Proline--tRNA ligase (571 aa).

Belongs to the class-II aminoacyl-tRNA synthetase family. ProS type 1 subfamily. In terms of assembly, homodimer.

The protein resides in the cytoplasm. It carries out the reaction tRNA(Pro) + L-proline + ATP = L-prolyl-tRNA(Pro) + AMP + diphosphate. Catalyzes the attachment of proline to tRNA(Pro) in a two-step reaction: proline is first activated by ATP to form Pro-AMP and then transferred to the acceptor end of tRNA(Pro). As ProRS can inadvertently accommodate and process non-cognate amino acids such as alanine and cysteine, to avoid such errors it has two additional distinct editing activities against alanine. One activity is designated as 'pretransfer' editing and involves the tRNA(Pro)-independent hydrolysis of activated Ala-AMP. The other activity is designated 'posttransfer' editing and involves deacylation of mischarged Ala-tRNA(Pro). The misacylated Cys-tRNA(Pro) is not edited by ProRS. This Pseudomonas putida (strain ATCC 700007 / DSM 6899 / JCM 31910 / BCRC 17059 / LMG 24140 / F1) protein is Proline--tRNA ligase.